A 398-amino-acid polypeptide reads, in one-letter code: Subtilisin-like serine protease EN45_076310 (398 aa).

A signal peptide spans Met-1–Ala-19. Residues Gly-20 to Thr-115 constitute a propeptide, removed in mature form. The Inhibitor I9 domain maps to Ser-35–Asn-113. Asn-113 carries an N-linked (GlcNAc...) asparagine glycan. Residues Pro-124–Lys-134 form an igE-binding region. Residues Ser-125–Gln-398 enclose the Peptidase S8 domain. Residue Asp-157 is the Charge relay system of the active site. The tract at residues Gly-163–Arg-170 is igE-binding. The interval Thr-175–Thr-195 is disordered. Residue His-188 is the Charge relay system of the active site. The igE-binding stretch occupies residues Ile-227 to Lys-245. N-linked (GlcNAc...) asparagine glycosylation is present at Asn-249. The igE-binding stretch occupies residues Ser-310 to Val-318. Ser-343 serves as the catalytic Charge relay system.

It belongs to the peptidase S8 family.

It is found in the secreted. With respect to regulation, inhibited by phenylmethanesulfonyl fluoride (PMSF) and diethyl pyrocarbonate (DEPC), but not by benzamidine. Its function is as follows. Serine protease that hydrolyzes casein, gelatin and human collagen type IV, but not elastin in vitro. Hydrolyzes OCLN of the human lung epithelial cells at 202-Gln-|-Ser-203 and Gln-211-|-Ile-212. In Penicillium chrysogenum (Penicillium notatum), this protein is Subtilisin-like serine protease EN45_076310.